The following is a 208-amino-acid chain: Imidazoleglycerol-phosphate dehydratase (208 aa).

This sequence belongs to the imidazoleglycerol-phosphate dehydratase family.

It is found in the cytoplasm. The enzyme catalyses D-erythro-1-(imidazol-4-yl)glycerol 3-phosphate = 3-(imidazol-4-yl)-2-oxopropyl phosphate + H2O. The protein operates within amino-acid biosynthesis; L-histidine biosynthesis; L-histidine from 5-phospho-alpha-D-ribose 1-diphosphate: step 6/9. In Hyphomonas neptunium (strain ATCC 15444), this protein is Imidazoleglycerol-phosphate dehydratase.